A 152-amino-acid polypeptide reads, in one-letter code: Transcriptional regulator MraZ (152 aa).

SpoVT-AbrB domains are found at residues 5–52 and 81–124; these read ASAI…PIHE and AHEV…DEQA.

This sequence belongs to the MraZ family. As to quaternary structure, forms oligomers.

The protein resides in the cytoplasm. It localises to the nucleoid. The sequence is that of Transcriptional regulator MraZ from Shewanella oneidensis (strain ATCC 700550 / JCM 31522 / CIP 106686 / LMG 19005 / NCIMB 14063 / MR-1).